The following is a 658-amino-acid chain: Threonine--tRNA ligase (658 aa).

Positions 1–64 constitute a TGS domain; that stretch reads MSNTVSLQFP…GASGKVEIIT (64 aa). A catalytic region spans residues 246–548; the sequence is DHRRLGREMD…LIENFAGHMP (303 aa). Residues C343, H394, and H525 each contribute to the Zn(2+) site.

Belongs to the class-II aminoacyl-tRNA synthetase family. Homodimer. Requires Zn(2+) as cofactor.

The protein localises to the cytoplasm. It catalyses the reaction tRNA(Thr) + L-threonine + ATP = L-threonyl-tRNA(Thr) + AMP + diphosphate + H(+). In terms of biological role, catalyzes the attachment of threonine to tRNA(Thr) in a two-step reaction: L-threonine is first activated by ATP to form Thr-AMP and then transferred to the acceptor end of tRNA(Thr). Also edits incorrectly charged L-seryl-tRNA(Thr). This is Threonine--tRNA ligase from Brucella canis (strain ATCC 23365 / NCTC 10854 / RM-666).